The sequence spans 130 residues: Glycine cleavage system H protein (130 aa).

The Lipoyl-binding domain occupies 28–110 (TVRIGITSVA…FGEGWLFEVE (83 aa)). K69 is subject to N6-lipoyllysine.

The protein belongs to the GcvH family. The glycine cleavage system is composed of four proteins: P, T, L and H. (R)-lipoate is required as a cofactor.

Its function is as follows. The glycine cleavage system catalyzes the degradation of glycine. The H protein shuttles the methylamine group of glycine from the P protein to the T protein. The sequence is that of Glycine cleavage system H protein from Corynebacterium aurimucosum (strain ATCC 700975 / DSM 44827 / CIP 107346 / CN-1) (Corynebacterium nigricans).